The primary structure comprises 138 residues: Ribosome-binding factor A (138 aa).

The disordered stretch occupies residues 117–138 (AEDGQHQEGPASADAKPESTEE).

Belongs to the RbfA family. In terms of assembly, monomer. Binds 30S ribosomal subunits, but not 50S ribosomal subunits or 70S ribosomes.

The protein resides in the cytoplasm. In terms of biological role, one of several proteins that assist in the late maturation steps of the functional core of the 30S ribosomal subunit. Associates with free 30S ribosomal subunits (but not with 30S subunits that are part of 70S ribosomes or polysomes). Required for efficient processing of 16S rRNA. May interact with the 5'-terminal helix region of 16S rRNA. The protein is Ribosome-binding factor A of Pseudomonas syringae pv. syringae (strain B728a).